A 64-amino-acid polypeptide reads, in one-letter code: Large ribosomal subunit protein bL32 (64 aa).

The interval 1–28 (MAVQKSRVTPSRRGQRRSHDALTAKKLS) is disordered.

This sequence belongs to the bacterial ribosomal protein bL32 family.

The protein is Large ribosomal subunit protein bL32 (rpmF) of Xylella fastidiosa (strain 9a5c).